The following is a 371-amino-acid chain: Bifunctional enzyme IspD/IspF (371 aa).

Positions 1 to 210 are 2-C-methyl-D-erythritol 4-phosphate cytidylyltransferase; sequence MLDISLIMLS…LNLPKPSWDI (210 aa). Residues 211–371 are 2-C-methyl-D-erythritol 2,4-cyclodiphosphate synthase; sequence FNGNGFDVHE…NLKYFDWMKL (161 aa). A divalent metal cation-binding residues include aspartate 217 and histidine 219. 4-CDP-2-C-methyl-D-erythritol 2-phosphate-binding positions include 217–219 and 243–244; these read DVH and HS. Histidine 251 contributes to the a divalent metal cation binding site. 4-CDP-2-C-methyl-D-erythritol 2-phosphate is bound by residues 265–267, 270–274, 341–344, phenylalanine 348, and arginine 351; these read DIG, FPDND, and TTTE.

It in the N-terminal section; belongs to the IspD/TarI cytidylyltransferase family. IspD subfamily. This sequence in the C-terminal section; belongs to the IspF family. It depends on a divalent metal cation as a cofactor.

The enzyme catalyses 2-C-methyl-D-erythritol 4-phosphate + CTP + H(+) = 4-CDP-2-C-methyl-D-erythritol + diphosphate. It catalyses the reaction 4-CDP-2-C-methyl-D-erythritol 2-phosphate = 2-C-methyl-D-erythritol 2,4-cyclic diphosphate + CMP. Its pathway is isoprenoid biosynthesis; isopentenyl diphosphate biosynthesis via DXP pathway; isopentenyl diphosphate from 1-deoxy-D-xylulose 5-phosphate: step 2/6. It functions in the pathway isoprenoid biosynthesis; isopentenyl diphosphate biosynthesis via DXP pathway; isopentenyl diphosphate from 1-deoxy-D-xylulose 5-phosphate: step 4/6. In terms of biological role, bifunctional enzyme that catalyzes the formation of 4-diphosphocytidyl-2-C-methyl-D-erythritol from CTP and 2-C-methyl-D-erythritol 4-phosphate (MEP) (IspD), and catalyzes the conversion of 4-diphosphocytidyl-2-C-methyl-D-erythritol 2-phosphate (CDP-ME2P) to 2-C-methyl-D-erythritol 2,4-cyclodiphosphate (ME-CPP) with a corresponding release of cytidine 5-monophosphate (CMP) (IspF). In Campylobacter lari (strain RM2100 / D67 / ATCC BAA-1060), this protein is Bifunctional enzyme IspD/IspF.